Here is a 685-residue protein sequence, read N- to C-terminus: tRNA 5-methylaminomethyl-2-thiouridine biosynthesis bifunctional protein MnmC (685 aa).

Residues 1-272 (MTAEPNKPCQ…MAAILSSATQ (272 aa)) form a tRNA (mnm(5)s(2)U34)-methyltransferase region. The interval 278–685 (IGGGLASAHL…LRKLLKGKAL (408 aa)) is FAD-dependent cmnm(5)s(2)U34 oxidoreductase.

It in the N-terminal section; belongs to the methyltransferase superfamily. tRNA (mnm(5)s(2)U34)-methyltransferase family. This sequence in the C-terminal section; belongs to the DAO family. FAD is required as a cofactor.

It is found in the cytoplasm. The enzyme catalyses 5-aminomethyl-2-thiouridine(34) in tRNA + S-adenosyl-L-methionine = 5-methylaminomethyl-2-thiouridine(34) in tRNA + S-adenosyl-L-homocysteine + H(+). Its function is as follows. Catalyzes the last two steps in the biosynthesis of 5-methylaminomethyl-2-thiouridine (mnm(5)s(2)U) at the wobble position (U34) in tRNA. Catalyzes the FAD-dependent demodification of cmnm(5)s(2)U34 to nm(5)s(2)U34, followed by the transfer of a methyl group from S-adenosyl-L-methionine to nm(5)s(2)U34, to form mnm(5)s(2)U34. This is tRNA 5-methylaminomethyl-2-thiouridine biosynthesis bifunctional protein MnmC from Shewanella baltica (strain OS185).